Reading from the N-terminus, the 102-residue chain is Biotrophy-associated secreted protein 4 (102 aa).

An N-terminal signal peptide occupies residues methionine 1–alanine 21. Asparagine 36 is a glycosylation site (N-linked (GlcNAc...) asparagine).

It localises to the secreted. Functionally, secreted effector involved in biotrophic colonization of plant cells. Participates in transition from the biotrophic to the necrotrophic phase of Magnaporthe oryzae. Elicits rice basic defense responses during the early stage of interaction and promotes cell death in the late stage of compatible interaction. The polypeptide is Biotrophy-associated secreted protein 4 (Pyricularia oryzae (strain 70-15 / ATCC MYA-4617 / FGSC 8958) (Rice blast fungus)).